A 71-amino-acid chain; its full sequence is UPF0346 protein Sez_1447 (71 aa).

It belongs to the UPF0346 family.

In Streptococcus equi subsp. zooepidemicus (strain MGCS10565), this protein is UPF0346 protein Sez_1447.